Consider the following 34-residue polypeptide: Photosystem II reaction center protein M (34 aa).

The helical transmembrane segment at 7-27 (GFVASLLFVLVPTVFLIILFI) threads the bilayer.

It belongs to the PsbM family. PSII is composed of 1 copy each of membrane proteins PsbA, PsbB, PsbC, PsbD, PsbE, PsbF, PsbH, PsbI, PsbJ, PsbK, PsbL, PsbM, PsbT, PsbX, PsbY, PsbZ, Psb30/Ycf12, peripheral proteins PsbO, CyanoQ (PsbQ), PsbU, PsbV and a large number of cofactors. It forms dimeric complexes.

The protein localises to the cellular thylakoid membrane. Its function is as follows. One of the components of the core complex of photosystem II (PSII). PSII is a light-driven water:plastoquinone oxidoreductase that uses light energy to abstract electrons from H(2)O, generating O(2) and a proton gradient subsequently used for ATP formation. It consists of a core antenna complex that captures photons, and an electron transfer chain that converts photonic excitation into a charge separation. This subunit is found at the monomer-monomer interface. This is Photosystem II reaction center protein M from Synechococcus sp. (strain WH7803).